The primary structure comprises 253 residues: Phycoerythrobilin:ferredoxin oxidoreductase (253 aa).

This sequence belongs to the HY2 family.

The catalysed reaction is (3Z)-phycoerythrobilin + oxidized 2[4Fe-4S]-[ferredoxin] = 15,16-dihydrobiliverdin + reduced 2[4Fe-4S]-[ferredoxin] + 2 H(+). Its function is as follows. Catalyzes the two-electron reduction of the C2 and C3(1) diene system of 15,16-dihydrobiliverdin. The sequence is that of Phycoerythrobilin:ferredoxin oxidoreductase from Prochlorococcus marinus (strain MIT 9312).